The chain runs to 201 residues: CASP-like protein 2B2 (201 aa).

At 1-28 (MSYLGVGVSPGNVTGSSTKMKLIDRKVR) the chain is on the cytoplasmic side. A helical transmembrane segment spans residues 29 to 49 (VTELILRSLVCAFALVAAILV). Residues 50 to 71 (ATDVQVREIFTIQKKAKFTDMK) are Extracellular-facing. Residues 72-92 (ALVFLVVINGIAAGYSLVQAV) traverse the membrane as a helical segment. Residues 93 to 108 (CCLVGLMKGSVLLSEP) lie on the Cytoplasmic side of the membrane. A helical membrane pass occupies residues 109–129 (LAWAIFFGDQAVAYLCVAGVA). The Extracellular portion of the chain corresponds to 130 to 166 (AAAQSAAFAKLGQPELQWMKICDMYGKFCNQVGEGIA). Residues 167–187 (SALFACIGMVLISCISAFGVF) form a helical membrane-spanning segment. Residues 188 to 201 (RLYGGSKPRQSSRW) are Cytoplasmic-facing.

This sequence belongs to the Casparian strip membrane proteins (CASP) family. As to quaternary structure, homodimer and heterodimers.

The protein localises to the cell membrane. The polypeptide is CASP-like protein 2B2 (Arabidopsis lyrata subsp. lyrata (Lyre-leaved rock-cress)).